The chain runs to 195 residues: Myelin basic protein (195 aa).

Alanine 2 carries the N-acetylalanine modification. Residues serine 8 and serine 13 each carry the phosphoserine modification. A Phosphotyrosine modification is found at tyrosine 15. A Phosphothreonine modification is found at threonine 18. Serine 20 bears the Phosphoserine mark. A Phosphothreonine modification is found at threonine 21. 2 positions are modified to citrulline: arginine 26 and arginine 32. The residue at position 36 (threonine 36) is a Phosphothreonine. Serine 41 carries the phosphoserine modification. 2 positions are modified to omega-N-methylarginine: arginine 44 and arginine 50. A disordered region spans residues 45-79 (FFSGDRGAPKRGSGKVPWLKQSRSPLPSHARSRPG). Serine 57 carries the phosphoserine modification. At threonine 92 the chain carries Phosphothreonine. Tyrosine 94 is subject to Phosphotyrosine. Serine 101 carries the post-translational modification Phosphoserine. 3 positions are modified to phosphothreonine: threonine 104, threonine 119, and threonine 122. Residues 117–139 (IVTPRTPPPSQGKGRGLSLSRFS) form a disordered region. Position 127 is a deamidated glutamine (glutamine 127). An Omega-N-methylarginine; alternate modification is found at arginine 131. A Symmetric dimethylarginine; alternate modification is found at arginine 131. Serine 139 is subject to Phosphoserine. Position 146 is an N6-acetyllysine (lysine 146). A Citrulline modification is found at arginine 154. A Deamidated glutamine modification is found at glutamine 172. A Citrulline modification is found at arginine 184. Phosphoserine is present on serine 186. Serine 190 is subject to Phosphoserine; by UHMK1. Citrulline is present on arginine 195.

It belongs to the myelin basic protein family. In terms of assembly, homodimer. In terms of processing, as in other animals, several charge isomers may be produced as a result of optional post-translational modifications, such as phosphorylation of serine or threonine residues, deamidation of glutamine or asparagine residues, citrullination and methylation of arginine residues. Arg-131 was found to be 44% monomethylated and 11% symmetrically dimethylated. Post-translationally, phosphorylated by TAOK2, VRK2, MAPK11, MAPK12, MAPK14 and MINK1. In terms of processing, proteolytically cleaved in B cell lysosomes by cathepsin CTSG which degrades the major immunogenic MBP epitope and prevents the activation of MBP-specific autoreactive T cells. Found in both the central and the peripheral nervous system.

It localises to the myelin membrane. Its function is as follows. Is, with PLP, the most abundant protein component of the myelin membrane in the CNS. Has a role in both the formation and stabilization of this compact multilayer arrangement of bilayers. Each splice variant and charge isomer may have a specialized function in the assembly of an optimized, biochemically functional myelin membrane. This chain is Myelin basic protein (Mbp), found in Rattus norvegicus (Rat).